The primary structure comprises 159 residues: MRRAVCPGSFDPIHNGHLEVIARAAGLFDEVIVAVSTNYAKKYRFPLEERIDMARETLASLRGIVVEPVGEGLLAEYCRQRGVSAIVKGLRSSSDFDYELPMATMNRQLSGVETVFLPTEGHYLHLSSTLIKEVFTLGGNVSDYVPRSVLKRLLAGESS.

Substrate is bound at residue S9. ATP is bound by residues 9–10 (SF) and H17. Substrate-binding residues include K41, L74, and K88. Residues 89–91 (GLR), E99, and 123–129 (YLHLSST) each bind ATP.

Belongs to the bacterial CoaD family. Homohexamer. Requires Mg(2+) as cofactor.

It localises to the cytoplasm. It catalyses the reaction (R)-4'-phosphopantetheine + ATP + H(+) = 3'-dephospho-CoA + diphosphate. Its pathway is cofactor biosynthesis; coenzyme A biosynthesis; CoA from (R)-pantothenate: step 4/5. Reversibly transfers an adenylyl group from ATP to 4'-phosphopantetheine, yielding dephospho-CoA (dPCoA) and pyrophosphate. This chain is Phosphopantetheine adenylyltransferase, found in Arthrobacter sp. (strain FB24).